A 110-amino-acid chain; its full sequence is Nucleoid-associated protein Sfri_2406 (110 aa).

Belongs to the YbaB/EbfC family. Homodimer.

The protein localises to the cytoplasm. The protein resides in the nucleoid. Binds to DNA and alters its conformation. May be involved in regulation of gene expression, nucleoid organization and DNA protection. The polypeptide is Nucleoid-associated protein Sfri_2406 (Shewanella frigidimarina (strain NCIMB 400)).